Consider the following 667-residue polypeptide: 1-deoxy-D-xylulose-5-phosphate synthase (667 aa).

Residues histidine 73 and 113 to 115 (SHA) contribute to the thiamine diphosphate site. Aspartate 145 provides a ligand contact to Mg(2+). Residues 146–147 (GA), asparagine 175, tyrosine 297, and glutamate 379 each bind thiamine diphosphate. Residue asparagine 175 coordinates Mg(2+).

It belongs to the transketolase family. DXPS subfamily. Homodimer. Requires Mg(2+) as cofactor. Thiamine diphosphate serves as cofactor.

It catalyses the reaction D-glyceraldehyde 3-phosphate + pyruvate + H(+) = 1-deoxy-D-xylulose 5-phosphate + CO2. Its pathway is metabolic intermediate biosynthesis; 1-deoxy-D-xylulose 5-phosphate biosynthesis; 1-deoxy-D-xylulose 5-phosphate from D-glyceraldehyde 3-phosphate and pyruvate: step 1/1. Catalyzes the acyloin condensation reaction between C atoms 2 and 3 of pyruvate and glyceraldehyde 3-phosphate to yield 1-deoxy-D-xylulose-5-phosphate (DXP). This is 1-deoxy-D-xylulose-5-phosphate synthase from Kocuria rhizophila (strain ATCC 9341 / DSM 348 / NBRC 103217 / DC2201).